The primary structure comprises 179 residues: Large ribosomal subunit protein uL5 (179 aa).

The protein belongs to the universal ribosomal protein uL5 family. As to quaternary structure, part of the 50S ribosomal subunit; part of the 5S rRNA/L5/L18/L25 subcomplex. Contacts the 5S rRNA and the P site tRNA. Forms a bridge to the 30S subunit in the 70S ribosome.

This is one of the proteins that bind and probably mediate the attachment of the 5S RNA into the large ribosomal subunit, where it forms part of the central protuberance. In the 70S ribosome it contacts protein S13 of the 30S subunit (bridge B1b), connecting the 2 subunits; this bridge is implicated in subunit movement. Contacts the P site tRNA; the 5S rRNA and some of its associated proteins might help stabilize positioning of ribosome-bound tRNAs. In Maridesulfovibrio salexigens (strain ATCC 14822 / DSM 2638 / NCIMB 8403 / VKM B-1763) (Desulfovibrio salexigens), this protein is Large ribosomal subunit protein uL5.